The chain runs to 108 residues: Protein SMALL AUXIN UP-REGULATED RNA 51 (108 aa).

It belongs to the ARG7 family. In terms of tissue distribution, expressed in organ primordia. Hardly observed in leaves.

The protein localises to the cell membrane. Provide a mechanistic link between auxin and plasma membrane H(+)-ATPases (PM H(+)-ATPases, e.g. AHA1 and AHA2), and triggers PM H(+)-ATPases activity by promoting phosphorylation of their C-terminal autoinhibitory domain as a result of PP2C-D subfamily of type 2C phosphatases inhibition, thus leading to the acidification of the apoplast and the facilitation of solutes and water uptake to drive cell expansion. Triggers plant growth probably by promoting cell elongation. Regulates branch angles and bending. The protein is Protein SMALL AUXIN UP-REGULATED RNA 51 of Arabidopsis thaliana (Mouse-ear cress).